Consider the following 230-residue polypeptide: Large ribosomal subunit protein uL1c (230 aa).

The protein belongs to the universal ribosomal protein uL1 family. In terms of assembly, part of the 50S ribosomal subunit.

Its subcellular location is the plastid. The protein resides in the chloroplast. Its function is as follows. Binds directly to 23S rRNA. Might be involved in E site tRNA release (Potential). This chain is Large ribosomal subunit protein uL1c (rpl1), found in Trieres chinensis (Marine centric diatom).